The chain runs to 295 residues: Putative F-box protein At5g44220 (295 aa).

The F-box domain occupies 56–102 (STNSDLLPMDLIKEILKRLPAKTLARFLCVSKLWSSIIRSRDLMKLF).

In Arabidopsis thaliana (Mouse-ear cress), this protein is Putative F-box protein At5g44220.